We begin with the raw amino-acid sequence, 308 residues long: Ornithine carbamoyltransferase (308 aa).

Residues Arg103 and 130–133 (HPAQ) each bind carbamoyl phosphate. Residues Asn162, Asp221, and 225 to 226 (SM) each bind L-ornithine. Residues 261–262 (CL) and Arg289 contribute to the carbamoyl phosphate site.

It belongs to the aspartate/ornithine carbamoyltransferase superfamily. OTCase family.

It is found in the cytoplasm. The enzyme catalyses carbamoyl phosphate + L-ornithine = L-citrulline + phosphate + H(+). The protein operates within amino-acid biosynthesis; L-arginine biosynthesis; L-arginine from L-ornithine and carbamoyl phosphate: step 1/3. Its function is as follows. Reversibly catalyzes the transfer of the carbamoyl group from carbamoyl phosphate (CP) to the N(epsilon) atom of ornithine (ORN) to produce L-citrulline. This chain is Ornithine carbamoyltransferase, found in Deinococcus radiodurans (strain ATCC 13939 / DSM 20539 / JCM 16871 / CCUG 27074 / LMG 4051 / NBRC 15346 / NCIMB 9279 / VKM B-1422 / R1).